The chain runs to 350 residues: Hydroxymethylglutaryl-CoA synthase (350 aa).

Glu83 acts as the Proton donor/acceptor in catalysis. Residue Cys115 is the Acyl-thioester intermediate of the active site. (3S)-3-hydroxy-3-methylglutaryl-CoA contacts are provided by Cys115 and Thr156. CoA is bound at residue Arg204. Thr206 and His239 together coordinate (3S)-3-hydroxy-3-methylglutaryl-CoA. His239 functions as the Proton donor/acceptor in the catalytic mechanism. Lys244 contributes to the CoA binding site. Positions 271 and 301 each coordinate (3S)-3-hydroxy-3-methylglutaryl-CoA.

The protein belongs to the thiolase-like superfamily. Archaeal HMG-CoA synthase family. Interacts with acetoacetyl-CoA thiolase that catalyzes the precedent step in the pathway and with a DUF35 protein. The acetoacetyl-CoA thiolase/HMG-CoA synthase complex channels the intermediate via a fused CoA-binding site, which allows for efficient coupling of the endergonic thiolase reaction with the exergonic HMGCS reaction.

It catalyses the reaction acetoacetyl-CoA + acetyl-CoA + H2O = (3S)-3-hydroxy-3-methylglutaryl-CoA + CoA + H(+). It participates in metabolic intermediate biosynthesis; (R)-mevalonate biosynthesis; (R)-mevalonate from acetyl-CoA: step 2/3. Its function is as follows. Catalyzes the condensation of acetyl-CoA with acetoacetyl-CoA to form 3-hydroxy-3-methylglutaryl-CoA (HMG-CoA). Functions in the mevalonate (MVA) pathway leading to isopentenyl diphosphate (IPP), a key precursor for the biosynthesis of isoprenoid compounds that are building blocks of archaeal membrane lipids. The protein is Hydroxymethylglutaryl-CoA synthase of Pyrococcus horikoshii (strain ATCC 700860 / DSM 12428 / JCM 9974 / NBRC 100139 / OT-3).